Consider the following 306-residue polypeptide: Ribosomal protein L11 methyltransferase (306 aa).

S-adenosyl-L-methionine-binding residues include T154, G179, D201, and N242.

Belongs to the methyltransferase superfamily. PrmA family.

It is found in the cytoplasm. It catalyses the reaction L-lysyl-[protein] + 3 S-adenosyl-L-methionine = N(6),N(6),N(6)-trimethyl-L-lysyl-[protein] + 3 S-adenosyl-L-homocysteine + 3 H(+). In terms of biological role, methylates ribosomal protein L11. This is Ribosomal protein L11 methyltransferase from Xylella fastidiosa (strain Temecula1 / ATCC 700964).